The primary structure comprises 493 residues: Ketol-acid reductoisomerase (NADP(+)) (493 aa).

One can recognise a KARI N-terminal Rossmann domain in the interval 14-208; sequence LDQLGRCRFM…GGDRAGVLES (195 aa). NADP(+) is bound by residues 45–48, Arg68, Arg76, Ser78, and 108–110; these read CGAQ and DKQ. Residue His132 is part of the active site. Gly158 contacts NADP(+). KARI C-terminal knotted domains follow at residues 209–345 and 346–486; these read SFVA…APKA and DGIK…MTDM. Asp217, Glu221, Glu390, and Glu394 together coordinate Mg(2+). Ser415 provides a ligand contact to substrate.

This sequence belongs to the ketol-acid reductoisomerase family. It depends on Mg(2+) as a cofactor.

The catalysed reaction is (2R)-2,3-dihydroxy-3-methylbutanoate + NADP(+) = (2S)-2-acetolactate + NADPH + H(+). It carries out the reaction (2R,3R)-2,3-dihydroxy-3-methylpentanoate + NADP(+) = (S)-2-ethyl-2-hydroxy-3-oxobutanoate + NADPH + H(+). Its pathway is amino-acid biosynthesis; L-isoleucine biosynthesis; L-isoleucine from 2-oxobutanoate: step 2/4. It participates in amino-acid biosynthesis; L-valine biosynthesis; L-valine from pyruvate: step 2/4. In terms of biological role, involved in the biosynthesis of branched-chain amino acids (BCAA). Catalyzes an alkyl-migration followed by a ketol-acid reduction of (S)-2-acetolactate (S2AL) to yield (R)-2,3-dihydroxy-isovalerate. In the isomerase reaction, S2AL is rearranged via a Mg-dependent methyl migration to produce 3-hydroxy-3-methyl-2-ketobutyrate (HMKB). In the reductase reaction, this 2-ketoacid undergoes a metal-dependent reduction by NADPH to yield (R)-2,3-dihydroxy-isovalerate. The chain is Ketol-acid reductoisomerase (NADP(+)) from Mannheimia succiniciproducens (strain KCTC 0769BP / MBEL55E).